A 283-amino-acid chain; its full sequence is Nucleotide-binding protein Hore_15880 (283 aa).

8 to 15 (GMSGAGKS) provides a ligand contact to ATP. 57-60 (DIRG) is a GTP binding site.

The protein belongs to the RapZ-like family.

Displays ATPase and GTPase activities. The protein is Nucleotide-binding protein Hore_15880 of Halothermothrix orenii (strain H 168 / OCM 544 / DSM 9562).